The primary structure comprises 225 residues: NAD(P)H-quinone oxidoreductase subunit K, chloroplastic (225 aa).

[4Fe-4S] cluster is bound by residues Cys43, Cys44, Cys108, and Cys139.

It belongs to the complex I 20 kDa subunit family. NDH is composed of at least 16 different subunits, 5 of which are encoded in the nucleus. [4Fe-4S] cluster serves as cofactor.

The protein resides in the plastid. It is found in the chloroplast thylakoid membrane. The enzyme catalyses a plastoquinone + NADH + (n+1) H(+)(in) = a plastoquinol + NAD(+) + n H(+)(out). It carries out the reaction a plastoquinone + NADPH + (n+1) H(+)(in) = a plastoquinol + NADP(+) + n H(+)(out). NDH shuttles electrons from NAD(P)H:plastoquinone, via FMN and iron-sulfur (Fe-S) centers, to quinones in the photosynthetic chain and possibly in a chloroplast respiratory chain. The immediate electron acceptor for the enzyme in this species is believed to be plastoquinone. Couples the redox reaction to proton translocation, and thus conserves the redox energy in a proton gradient. The polypeptide is NAD(P)H-quinone oxidoreductase subunit K, chloroplastic (Lactuca sativa (Garden lettuce)).